A 294-amino-acid chain; its full sequence is uncharacterized protein (294 aa).

Disordered stretches follow at residues M1–P148 and D268–L294. Phosphoserine occurs at positions 34 and 35. The span at S35–D44 shows a compositional bias: low complexity. Basic and acidic residues predominate over residues D52–G62. S71 and S90 each carry phosphoserine. Composition is skewed to basic and acidic residues over residues P73–K92 and G278–L294.

This is an uncharacterized protein from Homo sapiens (Human).